The primary structure comprises 944 residues: MGRRFKFLQKLAFLGQNHRYKALERDEVDTLIDEQYELKAIEREKAVAALPPREACKCSKEELARTFHVDLDSGLSEFAVAQRRLVHGWNEFVTDNTEPVWKKYLDQFRNPLILLLLGSSVVSVLTKEYEDAISIALAVLIVVTVGFIQEYRSEKSLEELTKLVPPECNCLRDGKLRHMLARDLVPGDVVSLSMGDRIPADIRLTEVTDLLVDESSFTGEVEPCSKTDSPLAGGGDLSTLSNVVFMGTLVQCGKGQGVVIGTGEQSQFGEVFKMMRAEETPKTPLQKSMDKLGKQLTVFSFGIIGLLMLVGWVQGKPLLSMFTIGVSLAVAAIPEGLPIVVMVTLVLGVLRMAKKRVIVKKLPIVETLGCCNVICSDKTGTLTANEMTATQLVTSDGFHAEVSGIGYSGEGTVCLLPSKEVIKEFSNVSVGKLVEAGCVANNAVVRKNAVMGQPTEGALVVLAMKMNLGSIKDSYIRKKEIPFSSEQKWMAVRCSLKNEDEEDVYFMKGAFEEVIHHCSTYNNGGIPLPLTPQQKSYCQQEEKKMGSLGLRVLALASGPELGRLTFLGLVGIIDPPRAGVKEAVQALSESDVSVKMVTGDALETALAIGRTIGLCDEKLKAMSGEEVEGMEQDALAARVRQVSVFFRTSPKHKVKIIKALQESGAIVAMTGDGVNDSVALKSADIGIAMGQTGTDVSKEAADMILVDDDFSAIMSAVEEGKGIFYNIKNFVRFQLSTSIAALSLITLSTVCNLPNPLNAMQILWVNIIMDGPPAQSLGVEPVDRDALKRPPRSVKDTILNRALILKILMSAAVILGGTLFIFWREIPENRTSTPRTTTMAFTCFVFFDLFNALSCRSQTKLIFEIGFFRNRMFLYSILGSLLGQLAVIYAPPLQKVFQTENLSALDLLLLTGLASSVFILSELLKLCEKFCSRAKADQMLPEAV.

Over 1–104 the chain is Cytoplasmic; the sequence is MGRRFKFLQK…DNTEPVWKKY (104 aa). Positions 69 to 93 are interaction with ORAI1; that stretch reads VDLDSGLSEFAVAQRRLVHGWNEFV. Residues 105-125 traverse the membrane as a helical segment; it reads LDQFRNPLILLLLGSSVVSVL. The Extracellular portion of the chain corresponds to 126 to 127; sequence TK. The helical transmembrane segment at 128–148 threads the bilayer; that stretch reads EYEDAISIALAVLIVVTVGFI. Topologically, residues 149-229 are cytoplasmic; the sequence is QEYRSEKSLE…EVEPCSKTDS (81 aa). A helical transmembrane segment spans residues 230–250; the sequence is PLAGGGDLSTLSNVVFMGTLV. Topologically, residues 251–291 are extracellular; the sequence is QCGKGQGVVIGTGEQSQFGEVFKMMRAEETPKTPLQKSMDK. Position 262 is a phosphothreonine (T262). S266 carries the post-translational modification Phosphoserine. The helical transmembrane segment at 292-312 threads the bilayer; sequence LGKQLTVFSFGIIGLLMLVGW. The Cytoplasmic portion of the chain corresponds to 313 to 329; the sequence is VQGKPLLSMFTIGVSLA. Residues V330, A331, I333, and E335 each contribute to the Ca(2+) site. Residues 330–350 form a helical membrane-spanning segment; it reads VAAIPEGLPIVVMVTLVLGVL. Residues 351–748 lie on the Extracellular side of the membrane; that stretch reads RMAKKRVIVK…IAALSLITLS (398 aa). D377 serves as the catalytic 4-aspartylphosphate intermediate. D672 and D676 together coordinate Mg(2+). The helical transmembrane segment at 749-769 threads the bilayer; the sequence is TVCNLPNPLNAMQILWVNIIM. 2 residues coordinate Ca(2+): N766 and D770. The Cytoplasmic segment spans residues 770 to 802; it reads DGPPAQSLGVEPVDRDALKRPPRSVKDTILNRA. The chain crosses the membrane as a helical span at residues 803–823; the sequence is LILKILMSAAVILGGTLFIFW. Topologically, residues 824-835 are extracellular; it reads REIPENRTSTPR. The chain crosses the membrane as a helical span at residues 836 to 853; that stretch reads TTTMAFTCFVFFDLFNAL. Residues 854-872 lie on the Cytoplasmic side of the membrane; the sequence is SCRSQTKLIFEIGFFRNRM. A helical transmembrane segment spans residues 873–893; sequence FLYSILGSLLGQLAVIYAPPL. At 894–903 the chain is on the extracellular side; it reads QKVFQTENLS. A helical membrane pass occupies residues 904–924; that stretch reads ALDLLLLTGLASSVFILSELL. Residues 925–944 are Cytoplasmic-facing; that stretch reads KLCEKFCSRAKADQMLPEAV.

This sequence belongs to the cation transport ATPase (P-type) (TC 3.A.3) family. Type IIA subfamily. As to quaternary structure, interacts (via N-terminus) with ORAI1 (via N- and C-termini); this interaction regulates Ca(2+) influx at the plasma membrane.

It localises to the golgi apparatus. Its subcellular location is the trans-Golgi network membrane. The protein localises to the cell membrane. The protein resides in the basolateral cell membrane. The catalysed reaction is Ca(2+)(in) + ATP + H2O = Ca(2+)(out) + ADP + phosphate + H(+). It carries out the reaction Mn(2+)(in) + ATP + H2O = Mn(2+)(out) + ADP + phosphate + H(+). Functionally, ATP-driven pump that supplies the Golgi apparatus with Ca(2+) and Mn(2+) ions, both essential cofactors for processing and trafficking of newly synthesized proteins in the secretory pathway. Within a catalytic cycle, acquires Ca(2+) or Mn(2+) ions on the cytoplasmic side of the membrane and delivers them to the lumenal side. The transfer of ions across the membrane is coupled to ATP hydrolysis and is associated with a transient phosphorylation that shifts the pump conformation from inward-facing to outward-facing state. Induces Ca(2+) influx independently of its ATP-driven pump function. At the basolateral membrane of mammary epithelial cells, interacts with Ca(2+) channel ORAI1 and mediates Ca(2+) entry independently of the Ca(2+) content of endoplasmic reticulum or Golgi stores. May facilitate transepithelial transport of large quantities of Ca(2+) for milk secretion via activation of Ca(2+) influx channels at the plasma membrane and active Ca(2+) transport at the Golgi apparatus. This Rattus norvegicus (Rat) protein is Calcium-transporting ATPase type 2C member 2 (Atp2c2).